We begin with the raw amino-acid sequence, 645 residues long: Threonine--tRNA ligase (645 aa).

The TGS domain occupies 1–63 (MNQINIQFPD…EQDGAIEIIT (63 aa)). The interval 242–540 (DHRKIGKDLE…LTEETKGAFP (299 aa)) is catalytic. Positions 336, 387, and 517 each coordinate Zn(2+).

The protein belongs to the class-II aminoacyl-tRNA synthetase family. As to quaternary structure, homodimer. Requires Zn(2+) as cofactor.

It is found in the cytoplasm. It catalyses the reaction tRNA(Thr) + L-threonine + ATP = L-threonyl-tRNA(Thr) + AMP + diphosphate + H(+). In terms of biological role, catalyzes the attachment of threonine to tRNA(Thr) in a two-step reaction: L-threonine is first activated by ATP to form Thr-AMP and then transferred to the acceptor end of tRNA(Thr). Also edits incorrectly charged L-seryl-tRNA(Thr). The sequence is that of Threonine--tRNA ligase from Staphylococcus epidermidis (strain ATCC 35984 / DSM 28319 / BCRC 17069 / CCUG 31568 / BM 3577 / RP62A).